A 631-amino-acid chain; its full sequence is tRNA uridine 5-carboxymethylaminomethyl modification enzyme MnmG (631 aa).

An FAD-binding site is contributed by 14–19 (GGGHAG). 274 to 288 (GPRYCPSIEDKIHRF) contacts NAD(+).

It belongs to the MnmG family. In terms of assembly, homodimer. Heterotetramer of two MnmE and two MnmG subunits. It depends on FAD as a cofactor.

The protein localises to the cytoplasm. Functionally, NAD-binding protein involved in the addition of a carboxymethylaminomethyl (cmnm) group at the wobble position (U34) of certain tRNAs, forming tRNA-cmnm(5)s(2)U34. In Pseudomonas paraeruginosa (strain DSM 24068 / PA7) (Pseudomonas aeruginosa (strain PA7)), this protein is tRNA uridine 5-carboxymethylaminomethyl modification enzyme MnmG.